An 872-amino-acid chain; its full sequence is Alanine--tRNA ligase (872 aa).

4 residues coordinate Zn(2+): H561, H565, C662, and H666.

It belongs to the class-II aminoacyl-tRNA synthetase family. Requires Zn(2+) as cofactor.

It localises to the cytoplasm. The catalysed reaction is tRNA(Ala) + L-alanine + ATP = L-alanyl-tRNA(Ala) + AMP + diphosphate. In terms of biological role, catalyzes the attachment of alanine to tRNA(Ala) in a two-step reaction: alanine is first activated by ATP to form Ala-AMP and then transferred to the acceptor end of tRNA(Ala). Also edits incorrectly charged Ser-tRNA(Ala) and Gly-tRNA(Ala) via its editing domain. This chain is Alanine--tRNA ligase, found in Thiobacillus denitrificans (strain ATCC 25259 / T1).